We begin with the raw amino-acid sequence, 206 residues long: ATP-dependent Clp protease proteolytic subunit (206 aa).

S110 functions as the Nucleophile in the catalytic mechanism. Residue H135 is part of the active site.

This sequence belongs to the peptidase S14 family. As to quaternary structure, fourteen ClpP subunits assemble into 2 heptameric rings which stack back to back to give a disk-like structure with a central cavity, resembling the structure of eukaryotic proteasomes.

It localises to the cytoplasm. The enzyme catalyses Hydrolysis of proteins to small peptides in the presence of ATP and magnesium. alpha-casein is the usual test substrate. In the absence of ATP, only oligopeptides shorter than five residues are hydrolyzed (such as succinyl-Leu-Tyr-|-NHMec, and Leu-Tyr-Leu-|-Tyr-Trp, in which cleavage of the -Tyr-|-Leu- and -Tyr-|-Trp bonds also occurs).. Its function is as follows. Cleaves peptides in various proteins in a process that requires ATP hydrolysis. Has a chymotrypsin-like activity. Plays a major role in the degradation of misfolded proteins. This is ATP-dependent Clp protease proteolytic subunit from Edwardsiella ictaluri (strain 93-146).